Reading from the N-terminus, the 297-residue chain is Guanylate kinase (297 aa).

The Guanylate kinase-like domain occupies 5–184 (GKVIIISGPS…AVSKITDILI (180 aa)). 12 to 19 (GPSGVGKG) is an ATP binding site. Residues 205–297 (ENIVDQKYTY…IKQRSDFSGD (93 aa)) are unknown.

It belongs to the guanylate kinase family.

The protein localises to the cytoplasm. It carries out the reaction GMP + ATP = GDP + ADP. Essential for recycling GMP and indirectly, cGMP. The protein is Guanylate kinase (gmk) of Mesoplasma florum (strain ATCC 33453 / NBRC 100688 / NCTC 11704 / L1) (Acholeplasma florum).